The chain runs to 664 residues: Macrolide export ATP-binding/permease protein MacB (664 aa).

The 238-residue stretch at 8-245 (LELVDVHRTY…AGPSVPLTLD (238 aa)) folds into the ABC transporter domain. 44 to 51 (GSSGSGKS) lines the ATP pocket. Transmembrane regions (helical) follow at residues 283–303 (LLSVLGILVGVASVIAMMALG), 543–563 (GAIAAISLLVGGIGIMNIMLV), 602–622 (IIGIIAGIGISALLAVFAGWA), and 627–647 (IVSIVLATFFSAITGIFFGLW).

This sequence belongs to the ABC transporter superfamily. Macrolide exporter (TC 3.A.1.122) family. In terms of assembly, homodimer.

It is found in the cell inner membrane. Non-canonical ABC transporter that contains transmembrane domains (TMD), which form a pore in the inner membrane, and an ATP-binding domain (NBD), which is responsible for energy generation. Confers resistance against macrolides. In Chlorobium luteolum (strain DSM 273 / BCRC 81028 / 2530) (Pelodictyon luteolum), this protein is Macrolide export ATP-binding/permease protein MacB.